The sequence spans 1035 residues: Calcium-transporting ATPase 7, plasma membrane-type (1035 aa).

At 1–166 (MECADYFIGS…KGFFRHVWDA (166 aa)) the chain is on the cytoplasmic side. A helical transmembrane segment spans residues 167-187 (LADVFLIVLLVCAAVSLAFGI). Residues 188-194 (KEHGIKD) lie on the Extracellular side of the membrane. Residues 195–215 (GWYDGVSIFLAVFLVAAVSAV) form a helical membrane-spanning segment. Topologically, residues 216-348 (SNHSQGKRFD…DPTPLQERLE (133 aa)) are cytoplasmic. Residues 349–369 (GLTSSIGKVGIAVAVLVFAVL) traverse the membrane as a helical segment. Over 370-395 (TARHFTGSTRDEQGNALFDKRNVTFN) the chain is Extracellular. N-linked (GlcNAc...) asparagine glycosylation is present at Asn-391. Residues 396–416 (AVFSGLVGIFQQAVTIIVVAI) form a helical membrane-spanning segment. Topologically, residues 417-818 (PEGLPLAVTL…GRCVYNNIQK (402 aa)) are cytoplasmic. Asp-460 acts as the 4-aspartylphosphate intermediate in catalysis. Residues Asp-761 and Asp-765 each coordinate Mg(2+). A helical membrane pass occupies residues 819 to 839 (FIQFQLTVNVAALVINFVSAV). The Extracellular portion of the chain corresponds to 840-845 (TTGRMP). The helical transmembrane segment at 846-866 (LTTVQLLWVNLIMDTMGALAL) threads the bilayer. Topologically, residues 867 to 887 (ATDTPTAGLMRRPPIGRAAPL) are cytoplasmic. The chain crosses the membrane as a helical span at residues 888–910 (ISNAMWRNLAAQAAYQVAVLLAL). At 911–919 (QYRGFGGAG) the chain is on the extracellular side. Residues 920–940 (AGERANGTMIFNAFVLCQVFN) form a helical membrane-spanning segment. Over 941 to 960 (EFNAREIERRNVFAGVHRNR) the chain is Cytoplasmic. Residues 961–981 (MFLGIVAVTVALQVVMVELLT) traverse the membrane as a helical segment. The Extracellular portion of the chain corresponds to 982–990 (KFAGTERLG). Residues 991-1011 (WGQWGACVGIAAVSWPIGWAV) form a helical membrane-spanning segment. Over 1012–1035 (KCIPVPERPFHEIITARRRRRRST) the chain is Cytoplasmic.

This sequence belongs to the cation transport ATPase (P-type) (TC 3.A.3) family. Type IIB subfamily.

It is found in the golgi apparatus membrane. The catalysed reaction is Ca(2+)(in) + ATP + H2O = Ca(2+)(out) + ADP + phosphate + H(+). Activated by calmodulin. Its function is as follows. This magnesium-dependent enzyme catalyzes the hydrolysis of ATP coupled with the translocation of calcium from the cytosol out of the cell, into the endoplasmic reticulum, or into organelles. Involved in salt stress tolerance. This chain is Calcium-transporting ATPase 7, plasma membrane-type, found in Oryza sativa subsp. japonica (Rice).